Here is a 117-residue protein sequence, read N- to C-terminus: UPF0342 protein GWCH70_0629 (117 aa).

The protein belongs to the UPF0342 family.

The protein is UPF0342 protein GWCH70_0629 of Geobacillus sp. (strain WCH70).